The following is a 331-amino-acid chain: Probable allantoicase (331 aa).

It belongs to the allantoicase family.

The enzyme catalyses allantoate + H2O = (S)-ureidoglycolate + urea. The protein operates within nitrogen metabolism; (S)-allantoin degradation; (S)-ureidoglycolate from allantoate (aminidohydrolase route): step 1/1. This chain is Probable allantoicase, found in Pseudomonas syringae pv. tomato (strain ATCC BAA-871 / DC3000).